We begin with the raw amino-acid sequence, 251 residues long: Pyrroloquinoline-quinone synthase (251 aa).

The protein belongs to the PqqC family.

It catalyses the reaction 6-(2-amino-2-carboxyethyl)-7,8-dioxo-1,2,3,4,7,8-hexahydroquinoline-2,4-dicarboxylate + 3 O2 = pyrroloquinoline quinone + 2 H2O2 + 2 H2O + H(+). It participates in cofactor biosynthesis; pyrroloquinoline quinone biosynthesis. In terms of biological role, ring cyclization and eight-electron oxidation of 3a-(2-amino-2-carboxyethyl)-4,5-dioxo-4,5,6,7,8,9-hexahydroquinoline-7,9-dicarboxylic-acid to PQQ. The chain is Pyrroloquinoline-quinone synthase from Pseudomonas putida (strain ATCC 700007 / DSM 6899 / JCM 31910 / BCRC 17059 / LMG 24140 / F1).